The chain runs to 264 residues: Mannose-specific lectin CEA (264 aa).

The N-terminal stretch at 1–23 (MAKLLLFLLPAILGLLVPRSAVA) is a signal peptide. 2 consecutive Bulb-type lectin domains span residues 26-131 (TNYL…PWVP) and 145-252 (NNLL…PQAK). Residues 51–55 (QDDCN), Tyr-59, Trp-63, Gln-64, 170–174 (QGDCN), Tyr-178, and 182–185 (YGWQ) each bind beta-D-mannose. A Carbohydrate-binding motif 1 motif is present at residues 51–59 (QDDCNLVLY). Cystine bridges form between Cys-54/Cys-74 and Cys-173/Cys-195. The Carbohydrate-binding motif 2 motif lies at 170–178 (QGDCNLVLY).

As to quaternary structure, forms heterotetramer of 2 chains 1 and 2 chains 2 arranged as a dimer of chain 1 and chain 2 heterodimers.

It is found in the secreted. Its function is as follows. Mannose-specific lectin. Shows agglutinating activity towards erythrocytes from rabbit. Has insecticidal activity against cotton aphids and other hemipteran insects. The polypeptide is Mannose-specific lectin CEA (Colocasia esculenta (Wild taro)).